The primary structure comprises 1697 residues: UDP-sugar-dependent glycosyltransferase 52 (1697 aa).

Disordered regions lie at residues 20–40 (HSDSLSSVGSSSNRSNSNYEN) and 142–166 (STDLSNIKTTTTTTTTTTPPPLMIP). The PH domain maps to 234–332 (DYVLENYLYK…WYHEINRMQK (99 aa)). 2 disordered regions span residues 573–645 (FRSK…TTHE) and 707–756 (PLDK…KQSQ). 2 stretches are compositionally biased toward low complexity: residues 584 to 628 (QNSQ…SSSA) and 711 to 722 (QQQQQQQQQQQQ). 2 consecutive GRAM domains span residues 658–793 (STFH…TKER) and 881–948 (IKIK…KKYS). Over residues 739-749 (TDSDTDSESDF) the composition is skewed to acidic residues. Disordered regions lie at residues 1011 to 1047 (SPSIASPSITPPSSTPPSSTTPSSTTPTITSPTIHST), 1062 to 1085 (DGENNSNNNNNNNNTNNTNKSNSF), 1110 to 1130 (SAQQQQQQQPKTTTTTTSTTT), and 1466 to 1488 (EHNNNNNNNNNNNNGENSDSNKS). Composition is skewed to low complexity over residues 1026–1047 (PPSSTTPSSTTPTITSPTIHST), 1065–1084 (NNSNNNNNNNNTNNTNKSNS), 1112–1130 (QQQQQQQPKTTTTTTSTTT), and 1469–1479 (NNNNNNNNNNN). The segment at 1622 to 1685 (SSAPNSCMGC…VCDKCFNDLQ (64 aa)) adopts an FYVE-type zinc-finger fold. Zn(2+) is bound by residues C1628, C1631, C1647, C1650, C1655, C1658, C1677, and C1680.

It belongs to the glycosyltransferase 28 family.

The enzyme catalyses a sterol + UDP-alpha-D-glucose = a sterol 3-beta-D-glucoside + UDP + H(+). In terms of biological role, involved in the biosynthesis of sterol glucoside. Can use different sterols such as cholesterol, sitosterol, and ergosterol as sugar acceptors. The sequence is that of UDP-sugar-dependent glycosyltransferase 52 (ugt52) from Dictyostelium discoideum (Social amoeba).